Consider the following 68-residue polypeptide: Conotoxin Eb11.7 (68 aa).

Positions 1-26 are cleaved as a signal peptide; the sequence is MMFRLTSVSCFLLVIVCLNLFQVVLT. Intrachain disulfides connect C29–C43, C36–C48, C42–C52, and C47–C56. F60 is subject to Phenylalanine amide. A propeptide spanning residues 64 to 68 is cleaved from the precursor; it reads ATFQE.

It belongs to the conotoxin I2 superfamily. In terms of tissue distribution, expressed by the venom duct.

The protein resides in the secreted. The sequence is that of Conotoxin Eb11.7 from Conus eburneus (Ivory cone).